Here is a 560-residue protein sequence, read N- to C-terminus: Beta-glucosidase 26, peroxisomal (560 aa).

A beta-D-glucoside contacts are provided by residues Gln33, His137, 182 to 183 (NE), Tyr326, Glu398, Trp450, 457 to 458 (EW), and Tyr466. Glu183 acts as the Proton donor in catalysis. Glu398 (nucleophile) is an active-site residue.

Belongs to the glycosyl hydrolase 1 family.

The protein resides in the peroxisome. It carries out the reaction Hydrolysis of terminal, non-reducing beta-D-glucosyl residues with release of beta-D-glucose.. In terms of biological role, possesses beta-glucosidase activity toward 4-methyl-umbelliferyl-beta-D-glucoside in vitro. Possesses myrosinase activity toward indol-3-yl-methylglucosinolate (I3M) and 4-methoxy-indol-3-yl-methylglucosinolate (4MO-I3M) in vivo. Component of an inducible preinvasion resistance mechanism that prevents penetration of the nonhost fungal species B.graminis and E.pisi. Involved in indole glucosinolate (IGS) activation during pattern-triggered immunity (PTI). Functions as a myrosinase for the breakdown of flg22-triggered IGS. Required for both callose deposition and glucosinolate activation during pathogen-triggered resistance. During fungal attack, required for IGS activation that mediates broad-spectrum antifungal defense. In Arabidopsis thaliana (Mouse-ear cress), this protein is Beta-glucosidase 26, peroxisomal.